A 346-amino-acid chain; its full sequence is Actin-like protein 10 (346 aa).

Belongs to the actin family.

This chain is Actin-like protein 10 (Actl10), found in Mus musculus (Mouse).